A 199-amino-acid chain; its full sequence is V-type proton ATPase subunit E (199 aa).

It belongs to the V-ATPase E subunit family.

In terms of biological role, produces ATP from ADP in the presence of a proton gradient across the membrane. The polypeptide is V-type proton ATPase subunit E (Clostridium botulinum (strain 657 / Type Ba4)).